Here is a 162-residue protein sequence, read N- to C-terminus: UPF0254 protein MTH1148 homolog (162 aa).

The protein belongs to the UPF0254 family.

This Methanothermobacter thermautotrophicus (strain Winter) (Methanobacterium thermoautotrophicum) protein is UPF0254 protein MTH1148 homolog.